We begin with the raw amino-acid sequence, 960 residues long: MPRAPHSMPLLLLLLLSLPQAQTAFPQDPIPLLTSDLQGTSPSSWFRGLEDDAVAAELGLDFQRFLTLNRTLLVAARDHVFSFDLQAQEEGEGLVPNKFLTWRSQDMENCAVRGKLTDECYNYIRVLVPWDSQTLLACGTNSFSPVCRSYGITSLQQEGEELSGQARCPFDATQSTVAISAEGSLYSATAADFQASDAVVYRSLGPQPPLRSAKYDSKWLREPHFVYALEHGDHVYFFFREVSVEDARLGRVQFSRVARVCKRDMGGSPRALDRHWTSFLKLRLNCSVPGDSTFYFDVLQSLTGPVNLHGRSALFGVFTTQTNSIPGSAVCAFYLDDIERGFEGKFKEQRSLDGAWTPVSEDKVPSPRPGSCAGVGAAALFSSSQDLPDDVLLFIKAHPLLDPAVPPATHQPLLTLTSRALLTQVAVDGMAGPHRNTTVLFLGSNDGTVLKVLPPGGQSLGPEPIILEEIDAYSHARCSGKRSPRAARRIIGLELDTEGHRLFVAFPGCIVYLSLSRCARHGACQRSCLASLDPYCGWHRFRGCVNIRGPGGTDVDLTGNQESMEHGDCQDGATGSQSGPGDSAYVLLGPGPSPETPSSPSDAHPGPQSSTLGAHTQGVRRDLSPASASRSIPIPLLLACVAAAFALGASVSGLLVSCACRRANRRRSKDIETPGLPRPLSLRSLARLHGGGPEPPPPPKDGDAAQTPQLYTTFLPPPEGGSPPELACLPTPETTPELPVKHLRASGGPWEWNQNGNNASEGPGRPRGCSAAGGPAPRVLVRPPPPGCPGQEVEVTTLEELLRYLHGPQPPRKGSEPLASAPFTSRPPASEPGAALFVDSSPMPRDCVPPLRLDVPPDGKRAAPSGRPALSAPAPRLGVSGSRRLPFPTHRAPPGLLTRVPSGGPSRYSGGPGRHLLYLGRPDGHRGRSLKRVDVKSPLSPKPPLATPPQPAPHGSHFNF.

An N-terminal signal peptide occupies residues Met1–Thr23. Residues Ala24–Pro635 are Extracellular-facing. In terms of domain architecture, Sema spans Pro29–Leu515. Asn69 carries N-linked (GlcNAc...) asparagine glycosylation. Disulfide bonds link Cys110–Cys120, Cys138–Cys147, Cys261–Cys372, and Cys286–Cys331. N-linked (GlcNAc...) asparagine glycosylation is present at Asn285. Asn436 is a glycosylation site (N-linked (GlcNAc...) asparagine). 4 disulfides stabilise this stretch: Cys478–Cys509, Cys518–Cys536, Cys524–Cys569, and Cys528–Cys544. The tract at residues Val555–Ser624 is disordered. The helical transmembrane segment at Leu636 to Val656 threads the bilayer. Residues Ser657–Phe960 are Cytoplasmic-facing. Disordered stretches follow at residues Leu685–Glu725, Ala745–Glu792, and His806–Phe960. Positions Arg899–Ser909 are enriched in low complexity. Residues Pro922 to Val935 show a composition bias toward basic and acidic residues. The span at Ser940 to Ala952 shows a compositional bias: pro residues.

The protein belongs to the semaphorin family. In terms of tissue distribution, expressed in many regions of the developing nervous system, probably in neurons and their precursors, but also in nonneural tissue such as immature muscle and dermis. In adult, strong expression in the skeletal muscle and moderate expression in the brain, where cerebellum shows the highest expression. Also expressed in almost all areas of the CNS.

Its subcellular location is the cell membrane. Its function is as follows. Shows growth cone collapsing activity on dorsal root ganglion (DRG) neurons in vitro. May be a stop signal for the DRG neurons in their target areas, and possibly also for other neurons. May also be involved in the maintenance and remodeling of neuronal connections. The sequence is that of Semaphorin-6C (Sema6c) from Rattus norvegicus (Rat).